Consider the following 414-residue polypeptide: Serine hydroxymethyltransferase (414 aa).

Residues Leu-121 and Gly-125 to Leu-127 each bind (6S)-5,6,7,8-tetrahydrofolate. The residue at position 229 (Lys-229) is an N6-(pyridoxal phosphate)lysine.

This sequence belongs to the SHMT family. Homodimer. The cofactor is pyridoxal 5'-phosphate.

The protein localises to the cytoplasm. It catalyses the reaction (6R)-5,10-methylene-5,6,7,8-tetrahydrofolate + glycine + H2O = (6S)-5,6,7,8-tetrahydrofolate + L-serine. Its pathway is one-carbon metabolism; tetrahydrofolate interconversion. The protein operates within amino-acid biosynthesis; glycine biosynthesis; glycine from L-serine: step 1/1. Functionally, catalyzes the reversible interconversion of serine and glycine with tetrahydrofolate (THF) serving as the one-carbon carrier. This reaction serves as the major source of one-carbon groups required for the biosynthesis of purines, thymidylate, methionine, and other important biomolecules. Also exhibits THF-independent aldolase activity toward beta-hydroxyamino acids, producing glycine and aldehydes, via a retro-aldol mechanism. This chain is Serine hydroxymethyltransferase, found in Polynucleobacter asymbioticus (strain DSM 18221 / CIP 109841 / QLW-P1DMWA-1) (Polynucleobacter necessarius subsp. asymbioticus).